The sequence spans 225 residues: Transmembrane protein C16orf54 homolog (225 aa).

The chain crosses the membrane as a helical span at residues 34 to 54 (IPIMLGLASLTAFFIITTAVL). The segment at 107-149 (RAPDPPTPGGTLEGRATAPPAIPTPHPSPSSLVPQTPPEVPAQ) is disordered. Phosphothreonine is present on residues threonine 113 and threonine 117. A Phosphoserine modification is found at serine 195.

The protein localises to the membrane. The chain is Transmembrane protein C16orf54 homolog from Rattus norvegicus (Rat).